The following is a 218-amino-acid chain: Peroxiredoxin-like 2A (218 aa).

The tract at residues 3-101 is thioredoxin-like fold; it reads MWSIGVGAVG…DELGVPLYAV (99 aa). Residues cysteine 74 and cysteine 77 each act as redox-active in the active site.

It belongs to the peroxiredoxin-like PRXL2 family. PRXL2A subfamily. As to expression, expressed in kidney, liver, skin, and brain. Widely expressed with highest levels detected in adipose tissue.

The protein resides in the cytoplasm. The protein localises to the secreted. Involved in redox regulation of the cell. Acts as an antioxidant. Inhibits TNFSF11-induced NFKB1 and JUN activation and osteoclast differentiation. May affect bone resorption and help to maintain bone mass. Acts as a negative regulator of macrophage-mediated inflammation by inhibiting macrophage production of inflammatory cytokines, probably through suppression of the MAPK signaling pathway. This Mus musculus (Mouse) protein is Peroxiredoxin-like 2A (Prxl2a).